A 567-amino-acid chain; its full sequence is 2-succinyl-5-enolpyruvyl-6-hydroxy-3-cyclohexene-1-carboxylate synthase (567 aa).

This sequence belongs to the TPP enzyme family. MenD subfamily. Homodimer. Requires Mg(2+) as cofactor. The cofactor is Mn(2+). It depends on thiamine diphosphate as a cofactor.

The catalysed reaction is isochorismate + 2-oxoglutarate + H(+) = 5-enolpyruvoyl-6-hydroxy-2-succinyl-cyclohex-3-ene-1-carboxylate + CO2. It functions in the pathway quinol/quinone metabolism; 1,4-dihydroxy-2-naphthoate biosynthesis; 1,4-dihydroxy-2-naphthoate from chorismate: step 2/7. It participates in quinol/quinone metabolism; menaquinone biosynthesis. Its function is as follows. Catalyzes the thiamine diphosphate-dependent decarboxylation of 2-oxoglutarate and the subsequent addition of the resulting succinic semialdehyde-thiamine pyrophosphate anion to isochorismate to yield 2-succinyl-5-enolpyruvyl-6-hydroxy-3-cyclohexene-1-carboxylate (SEPHCHC). The polypeptide is 2-succinyl-5-enolpyruvyl-6-hydroxy-3-cyclohexene-1-carboxylate synthase (Shewanella loihica (strain ATCC BAA-1088 / PV-4)).